The chain runs to 309 residues: MSIRIIPQDELGSSEKRTADMIPPLLFPRLKNVYNRRAERLRELAENNPLGDYLRFAALIAHAQEVVLYDHPLEMDLTARIKEANDQGKPPLDIHVLPRDKHWQKLLHSLIAELKPEMSGPALAVIENLEKASEQELEQMASALFASDFASVSSDKAPFIWAALSLYWAQMASLIPGKARAEYGEARQYCPVCGSMPVSSMVQISTTQGLRYLHCNLCETEWHVVRVKCSNCEQSRDLHYWSLENEQAAVKAESCGDCGTYLKILYQEKDPKVEAVADDLASLVLDARMEQEGFARSSINPFLFPGEGE.

This sequence belongs to the FdhE family.

It localises to the cytoplasm. Functionally, necessary for formate dehydrogenase activity. The sequence is that of Protein FdhE from Salmonella choleraesuis (strain SC-B67).